We begin with the raw amino-acid sequence, 446 residues long: Phosphoglucosamine mutase (446 aa).

The Phosphoserine intermediate role is filled by serine 103. Serine 103, aspartate 242, aspartate 244, and aspartate 246 together coordinate Mg(2+). Serine 103 bears the Phosphoserine mark.

The protein belongs to the phosphohexose mutase family. Requires Mg(2+) as cofactor. Post-translationally, activated by phosphorylation.

The enzyme catalyses alpha-D-glucosamine 1-phosphate = D-glucosamine 6-phosphate. Its function is as follows. Catalyzes the conversion of glucosamine-6-phosphate to glucosamine-1-phosphate. The protein is Phosphoglucosamine mutase of Vibrio cholerae serotype O1 (strain ATCC 39315 / El Tor Inaba N16961).